Here is a 358-residue protein sequence, read N- to C-terminus: Peptide chain release factor 1 (358 aa).

Residue Gln-233 is modified to N5-methylglutamine.

Belongs to the prokaryotic/mitochondrial release factor family. Methylated by PrmC. Methylation increases the termination efficiency of RF1.

Its subcellular location is the cytoplasm. Peptide chain release factor 1 directs the termination of translation in response to the peptide chain termination codons UAG and UAA. The protein is Peptide chain release factor 1 of Flavobacterium johnsoniae (strain ATCC 17061 / DSM 2064 / JCM 8514 / BCRC 14874 / CCUG 350202 / NBRC 14942 / NCIMB 11054 / UW101) (Cytophaga johnsonae).